We begin with the raw amino-acid sequence, 402 residues long: Candidapepsin-1 (402 aa).

The segment at residues 1–25 is a signal peptide (or 18, or 21); the sequence is MVAIVTLTRQVLLTIALALFAQGAA. Positions 26 to 62 are cleaved as a propeptide — activation peptide; it reads IPEEAAKRDDNPGFVALDFDVLRKPLNLTEALLREKR. The N-linked (GlcNAc...) asparagine glycan is linked to Asn-52. Residues 76 to 389 form the Peptidase A1 domain; sequence YASKVSVGSN…NLDANTISIA (314 aa). Residue Asp-94 is part of the active site. A disulfide bridge connects residues Cys-109 and Cys-115. The active site involves Asp-282. Cysteines 320 and 354 form a disulfide.

This sequence belongs to the peptidase A1 family. In terms of processing, O-glycosylated.

The protein resides in the secreted. It carries out the reaction Preferential cleavage at the carboxyl of hydrophobic amino acids, but fails to cleave 15-Leu-|-Tyr-16, 16-Tyr-|-Leu-17 and 24-Phe-|-Phe-25 of insulin B chain. Activates trypsinogen, and degrades keratin.. This is Candidapepsin-1 (SAPP1) from Candida parapsilosis (Yeast).